Here is a 442-residue protein sequence, read N- to C-terminus: Ribosomal protein uS12 methylthiotransferase RimO (442 aa).

In terms of domain architecture, MTTase N-terminal spans 5–117 (PSIGVVSLGC…VLDAIHAALP (113 aa)). Residues Cys-14, Cys-50, Cys-79, Cys-148, Cys-152, and Cys-155 each contribute to the [4Fe-4S] cluster site. The Radical SAM core domain occupies 134 to 371 (LTPPHYAYLK…MAVQEAISRQ (238 aa)). A TRAM domain is found at 374-441 (QRRVGQRQRV…AHDLYGMVVS (68 aa)).

This sequence belongs to the methylthiotransferase family. RimO subfamily. It depends on [4Fe-4S] cluster as a cofactor.

It is found in the cytoplasm. It catalyses the reaction L-aspartate(89)-[ribosomal protein uS12]-hydrogen + (sulfur carrier)-SH + AH2 + 2 S-adenosyl-L-methionine = 3-methylsulfanyl-L-aspartate(89)-[ribosomal protein uS12]-hydrogen + (sulfur carrier)-H + 5'-deoxyadenosine + L-methionine + A + S-adenosyl-L-homocysteine + 2 H(+). In terms of biological role, catalyzes the methylthiolation of an aspartic acid residue of ribosomal protein uS12. This Acidithiobacillus ferrooxidans (strain ATCC 53993 / BNL-5-31) (Leptospirillum ferrooxidans (ATCC 53993)) protein is Ribosomal protein uS12 methylthiotransferase RimO.